Here is a 366-residue protein sequence, read N- to C-terminus: Beta sliding clamp (366 aa).

Belongs to the beta sliding clamp family. As to quaternary structure, forms a ring-shaped head-to-tail homodimer around DNA which binds and tethers DNA polymerases and other proteins to the DNA. The DNA replisome complex has a single clamp-loading complex (3 tau and 1 each of delta, delta', psi and chi subunits) which binds 3 Pol III cores (1 core on the leading strand and 2 on the lagging strand) each with a beta sliding clamp dimer. Additional proteins in the replisome are other copies of gamma, psi and chi, Ssb, DNA helicase and RNA primase.

It is found in the cytoplasm. Confers DNA tethering and processivity to DNA polymerases and other proteins. Acts as a clamp, forming a ring around DNA (a reaction catalyzed by the clamp-loading complex) which diffuses in an ATP-independent manner freely and bidirectionally along dsDNA. Initially characterized for its ability to contact the catalytic subunit of DNA polymerase III (Pol III), a complex, multichain enzyme responsible for most of the replicative synthesis in bacteria; Pol III exhibits 3'-5' exonuclease proofreading activity. The beta chain is required for initiation of replication as well as for processivity of DNA replication. The protein is Beta sliding clamp (dnaN) of Salmonella typhimurium (strain LT2 / SGSC1412 / ATCC 700720).